The chain runs to 1430 residues: Transport and Golgi organization protein 1 (1430 aa).

The first 34 residues, 1–34 (MRLTNEKATMQPQLSDLALVLGLLICCLPTLTWA), serve as a signal peptide directing secretion. Topologically, residues 35–796 (ATLSDKRLCA…ADKLVDHSQL (762 aa)) are extracellular. The region spanning 50 to 112 (QIISMGIAKI…NKDFIMEKKI (63 aa)) is the SH3 domain. 5 disordered regions span residues 253–272 (QEEP…PPLP), 284–303 (DFDY…SQDN), 318–362 (ESIE…SLPT), 445–524 (SDAE…DQQK), and 568–673 (EEAE…TDNH). Residues 284 to 296 (DFDYGDDETDDDS) are compositionally biased toward acidic residues. Composition is skewed to basic and acidic residues over residues 331–357 (KKTD…KQED), 497–524 (LQEE…DQQK), and 568–588 (EEAE…RSSE). Residues 494–620 (YKQLQEEQEK…QSNEIVDNNN (127 aa)) are a coiled coil. Over residues 594–621 (LSVQEANMQQLNDSVDSQSNEIVDNNNR) the composition is skewed to polar residues. Residues 640-651 (HPSTASHTTPTP) show a composition bias toward low complexity. Residues 797–817 (LLCVVIAAISSLFFMFAYYCF) traverse the membrane as a helical segment. The Cytoplasmic portion of the chain corresponds to 818–1430 (CNSSQEGALL…SATSRPYSEV (613 aa)). Residues Ser-865 and Ser-868 each carry the phosphoserine modification. Residues 869-1245 (NDMVADLKKQ…SLRRKLTTMA (377 aa)) are a coiled coil. Over residues 1105 to 1114 (SQLQQSSQDV) the composition is skewed to low complexity. 2 disordered regions span residues 1105–1126 (SQLQ…QSER) and 1312–1430 (LPPT…YSEV). Residues 1115–1126 (EQLKQDFNQSER) are compositionally biased toward basic and acidic residues. Over residues 1321–1334 (RPPPLGRMRSPPPS) the composition is skewed to pro residues. Over residues 1336 to 1346 (RGDRDRERYSD) the composition is skewed to basic and acidic residues. A phosphoserine mark is found at Ser-1345 and Ser-1348. A compositionally biased stretch (acidic residues) spans 1348 to 1361 (SDYDDYDDDEEDDR). The segment covering 1364–1380 (DRRRRHSGSWGRRHRGS) has biased composition (basic residues). Positions 1387–1402 (TYRSLSPSDSRYNYND) are enriched in polar residues. Phosphoserine is present on residues Ser-1390 and Ser-1392. Positions 1408-1417 (SPPPSPPPVP) are enriched in pro residues. Positions 1420–1430 (RSATSRPYSEV) are enriched in polar residues.

It belongs to the MIA/OTOR family. Tango1 subfamily.

It localises to the golgi apparatus membrane. The protein localises to the golgi apparatus. It is found in the trans-Golgi network. Its function is as follows. Required for protein secretion. May participate in cargo loading by binding to COPII coat subunits and guiding SH3-bound proteins into a growing carrier. At basal transitional ER sites in follicle epithelial cells, mediates the exit of basal membrane protein such as vkg, LanB1 and Trol, from the endoplasmic reticulum (ER) to basal Golgi clusters. The chain is Transport and Golgi organization protein 1 from Drosophila melanogaster (Fruit fly).